The sequence spans 396 residues: L-lactate dehydrogenase (396 aa).

The region spanning 1–380 is the FMN hydroxy acid dehydrogenase domain; the sequence is MIISAASDYR…SGDSLVQELG (380 aa). Tyr24 is a substrate binding site. Ser106 and Gln127 together coordinate FMN. A substrate-binding site is contributed by Tyr129. Thr155 is an FMN binding site. Arg164 provides a ligand contact to substrate. An FMN-binding site is contributed by Lys251. Residue His275 is the Proton acceptor of the active site. Arg278 provides a ligand contact to substrate. 306 to 330 is a binding site for FMN; that stretch reads DSGIRNGLDVVRMIALGADTVLLGR.

The protein belongs to the FMN-dependent alpha-hydroxy acid dehydrogenase family. Requires FMN as cofactor.

It localises to the cell inner membrane. The enzyme catalyses (S)-lactate + A = pyruvate + AH2. In terms of biological role, catalyzes the conversion of L-lactate to pyruvate. Is coupled to the respiratory chain. The polypeptide is L-lactate dehydrogenase (Salmonella paratyphi C (strain RKS4594)).